An 891-amino-acid chain; its full sequence is Echinoderm microtubule-associated protein-like elp-1 (891 aa).

A compositionally biased stretch (polar residues) spans 77–88 (DQSRSPTCSGYS). The interval 77 to 167 (DQSRSPTCSG…ARGSPMRKWV (91 aa)) is disordered. Residues 104–117 (SPSHAPPRSSHANS) show a composition bias toward low complexity. The span at 118–131 (KSLYINGMNNNSEE) shows a compositional bias: polar residues. WD repeat units lie at residues 330-401 (GHTC…TLMV), 404-447 (GFEK…REGE), 499-537 (DKPK…TTKQ), 541-579 (VHPG…RTRR), 626-664 (GDPG…VEFS), 708-747 (EGTA…NLLV), 753-792 (HIPA…CDGT), 816-853 (SSNG…VTAG), and 859-890 (GHGR…EWCL).

Belongs to the WD repeat EMAP family.

It is found in the cytoplasm. The protein resides in the cytoskeleton. May modify the assembly dynamics of microtubules, such that microtubules are slightly longer, but more dynamic. This chain is Echinoderm microtubule-associated protein-like elp-1 (elp-1), found in Caenorhabditis elegans.